The following is a 175-amino-acid chain: NADH-quinone oxidoreductase subunit I 2 (175 aa).

4Fe-4S ferredoxin-type domains are found at residues 50–82 (HVLQ…IEAA) and 98–127 (KVYN…HGHG). The [4Fe-4S] cluster site is built by C62, C65, C68, C72, C107, C110, C113, and C117.

Belongs to the complex I 23 kDa subunit family. As to quaternary structure, NDH-1 is composed of 14 different subunits. Subunits NuoA, H, J, K, L, M, N constitute the membrane sector of the complex. The cofactor is [4Fe-4S] cluster.

The protein resides in the cell inner membrane. The enzyme catalyses a quinone + NADH + 5 H(+)(in) = a quinol + NAD(+) + 4 H(+)(out). NDH-1 shuttles electrons from NADH, via FMN and iron-sulfur (Fe-S) centers, to quinones in the respiratory chain. The immediate electron acceptor for the enzyme in this species is believed to be ubiquinone. Couples the redox reaction to proton translocation (for every two electrons transferred, four hydrogen ions are translocated across the cytoplasmic membrane), and thus conserves the redox energy in a proton gradient. The polypeptide is NADH-quinone oxidoreductase subunit I 2 (Koribacter versatilis (strain Ellin345)).